We begin with the raw amino-acid sequence, 635 residues long: Extracellular metalloproteinase 9 (635 aa).

A signal peptide spans 1–19 (MHGLLLAAGLLTLPLRALA). Positions 20 to 246 (HPGHQSTSIL…IHGVTDYVAD (227 aa)) are excised as a propeptide. Residue Asn274 is glycosylated (N-linked (GlcNAc...) asparagine). The tract at residues 279 to 307 (TWHSDGNTRYPTTRGNNGIAQDNPSGGTG) is disordered. Residue Asn413 is glycosylated (N-linked (GlcNAc...) asparagine). His430 provides a ligand contact to Zn(2+). Glu431 is a catalytic residue. Residue His434 participates in Zn(2+) binding. Asn475 is a glycosylation site (N-linked (GlcNAc...) asparagine).

Belongs to the peptidase M36 family. The cofactor is Zn(2+).

It is found in the secreted. In terms of biological role, secreted metalloproteinase that allows assimilation of proteinaceous substrates. The protein is Extracellular metalloproteinase 9 (MEP9) of Uncinocarpus reesii (strain UAMH 1704).